The sequence spans 270 residues: NAD(P)H-hydrate epimerase (270 aa).

A YjeF N-terminal domain is found at 25–234 (FQQLMDLMQN…DLLAPEAIYQ (210 aa)). 73–77 (DNGGQ) contributes to the (6S)-NADPHX binding site. The K(+) site is built by N74 and D144. (6S)-NADPHX contacts are provided by residues 148-154 (GVGLYGH) and E177. Position 180 (T180) interacts with K(+).

The protein belongs to the NnrE/AIBP family. K(+) is required as a cofactor.

The enzyme catalyses (6R)-NADHX = (6S)-NADHX. It carries out the reaction (6R)-NADPHX = (6S)-NADPHX. Functionally, catalyzes the epimerization of the S- and R-forms of NAD(P)HX, a damaged form of NAD(P)H that is a result of enzymatic or heat-dependent hydration. This is a prerequisite for the S-specific NAD(P)H-hydrate dehydratase to allow the repair of both epimers of NAD(P)HX. This is NAD(P)H-hydrate epimerase from Legionella pneumophila subsp. pneumophila (strain Philadelphia 1 / ATCC 33152 / DSM 7513).